We begin with the raw amino-acid sequence, 317 residues long: Probable cell division protein WhiA (317 aa).

Positions 278–311 (SLQGLGELLDPQVGKSGVNHRLRKIGEKADELRQ) form a DNA-binding region, H-T-H motif.

It belongs to the WhiA family.

Functionally, involved in cell division and chromosome segregation. This Lachnospira eligens (strain ATCC 27750 / DSM 3376 / VPI C15-48 / C15-B4) (Eubacterium eligens) protein is Probable cell division protein WhiA.